A 222-amino-acid polypeptide reads, in one-letter code: uncharacterized protein (222 aa).

This is an uncharacterized protein from Pyrococcus woesei.